We begin with the raw amino-acid sequence, 248 residues long: Secreted and transmembrane protein 1 (248 aa).

Positions 1 to 28 (MQTCPLAFPGHVSQALGTLLFLAASLSA) are cleaved as a signal peptide. Over 29 to 145 (QNEGWDSPIC…AEPQSAPDTG (117 aa)) the chain is Extracellular. Cys38 and Cys55 form a disulfide bridge. Asn56 carries an N-linked (GlcNAc...) asparagine glycan. A helical membrane pass occupies residues 146 to 166 (FWPVPAVVTAVFILLVALVMF). Residues 167 to 248 (AWYRCRCSQQ…QPLFPYAADP (82 aa)) are Cytoplasmic-facing.

This sequence belongs to the SECTM family. Interacts with CD7. Detected at the highest levels in peripheral blood leukocytes and breast cancer cell lines. Found in leukocytes of the myeloid lineage, with the strongest expression observed in granulocytes and no detectable expression in lymphocytes. Expressed in thymic epithelial cells and fibroblasts.

It localises to the cell membrane. Its subcellular location is the secreted. Its function is as follows. May be involved in thymocyte signaling. The chain is Secreted and transmembrane protein 1 (SECTM1) from Homo sapiens (Human).